Here is a 259-residue protein sequence, read N- to C-terminus: TCF3 fusion partner homolog (259 aa).

Disordered regions lie at residues 51 to 72 and 141 to 210; these read GLGD…GRRR and EDDG…APVQ. S167 carries the phosphoserine modification. At T172 the chain carries Phosphothreonine. S180 and S188 each carry phosphoserine. Residue T203 is modified to Phosphothreonine. K222 participates in a covalent cross-link: Glycyl lysine isopeptide (Lys-Gly) (interchain with G-Cter in SUMO2). A disordered region spans residues 240 to 259; sequence VSRGPDKLLPYPTLASPPFD. The residue at position 255 (S255) is a Phosphoserine.

In terms of assembly, interacts with NOL3; translocates NOL3 into the nucleus and negatively regulated TFPT-induced cell death. Component of the chromatin remodeling INO80 complex; specifically part of a complex module associated with the N-terminus of INO80. In terms of tissue distribution, ubiquitously expressed. Abundant in the brain.

It is found in the nucleus. Functionally, appears to promote apoptosis in a p53/TP53-independent manner. Its function is as follows. Putative regulatory component of the chromatin remodeling INO80 complex which is involved in transcriptional regulation, DNA replication and probably DNA repair. The polypeptide is TCF3 fusion partner homolog (Tfpt) (Rattus norvegicus (Rat)).